The following is a 713-amino-acid chain: Ribosomal RNA large subunit methyltransferase K/L (713 aa).

A THUMP domain is found at 43-154 (LAYRITLWTR…NGVITIAMNF (112 aa)).

This sequence belongs to the methyltransferase superfamily. RlmKL family.

It localises to the cytoplasm. It carries out the reaction guanosine(2445) in 23S rRNA + S-adenosyl-L-methionine = N(2)-methylguanosine(2445) in 23S rRNA + S-adenosyl-L-homocysteine + H(+). The catalysed reaction is guanosine(2069) in 23S rRNA + S-adenosyl-L-methionine = N(2)-methylguanosine(2069) in 23S rRNA + S-adenosyl-L-homocysteine + H(+). Functionally, specifically methylates the guanine in position 2445 (m2G2445) and the guanine in position 2069 (m7G2069) of 23S rRNA. This Shewanella sp. (strain ANA-3) protein is Ribosomal RNA large subunit methyltransferase K/L.